The sequence spans 130 residues: Small ribosomal subunit protein uS9 (130 aa).

The tract at residues 102 to 130 (GFLTRDPRMKERKKYGLKKARRSPQFSKR) is disordered. Residues 111–130 (KERKKYGLKKARRSPQFSKR) show a composition bias toward basic residues.

It belongs to the universal ribosomal protein uS9 family.

The sequence is that of Small ribosomal subunit protein uS9 from Clostridium botulinum (strain ATCC 19397 / Type A).